A 243-amino-acid polypeptide reads, in one-letter code: Transmembrane protein 174 (243 aa).

The next 2 membrane-spanning stretches (helical) occupy residues 40-60 and 73-93; these read LLFSGIFLGLVGITFTVMGWI and LLGPVLLSVGVTFILIAVCKF.

As to quaternary structure, interacts with SLC34A1; regulates SLC34A1 internalization by PTH and FGF23.

It is found in the endoplasmic reticulum membrane. The protein localises to the apical cell membrane. Its function is as follows. Regulator of plasma phosphate homeostasis. Decreases serum inorganic phosphate (Pi) uptake by regulating the sodium-phosphate cotransporter SLC34A1 trafficking by PTH and FGF23 in the kidney. The chain is Transmembrane protein 174 (TMEM174) from Pongo abelii (Sumatran orangutan).